Reading from the N-terminus, the 243-residue chain is Thiocyanate hydrolase subunit gamma (243 aa).

Co(3+)-binding residues include Cys128, Cys131, Ser132, and Cys133. The residue at position 131 (Cys131) is a Cysteine sulfinic acid (-SO2H). Cys133 carries the cysteine sulfenic acid (-SOH) modification.

This sequence belongs to the nitrile hydratase subunit alpha family. As to quaternary structure, heterododecamer consisting of 4 alpha, 4 beta, and 4 gamma subunits. Requires Co(3+) as cofactor.

It carries out the reaction thiocyanate + H2O + 2 H(+) = carbonyl sulfide + NH4(+). Its pathway is organosulfur degradation; thiocyanate degradation. Involved in the degradation of thiocyanate. The sequence is that of Thiocyanate hydrolase subunit gamma (scnC) from Thiobacillus thioparus.